The chain runs to 513 residues: Protein disulfide-isomerase (513 aa).

The first 23 residues, 1-23, serve as a signal peptide directing secretion; that stretch reads MAIRSKAWISLLLALAVALSARA. Residues 24–145 form the Thioredoxin 1 domain; sequence EEEPAAAAEG…IVDYLKKQVG (122 aa). Residues Cys-63 and Cys-66 each act as nucleophile in the active site. Cys-63 and Cys-66 form a disulfide bridge. Residue Asn-279 is glycosylated (N-linked (GlcNAc...) asparagine). Residues 366–485 enclose the Thioredoxin 2 domain; sequence FRNSEPIPEV…IVDFIKKSKE (120 aa). Active-site nucleophile residues include Cys-408 and Cys-411. Cys-408 and Cys-411 are oxidised to a cystine. The disordered stretch occupies residues 485-513; that stretch reads ETAAPHHHHHPGATGIREGSRAEPVKDEL. Over residues 502-513 the composition is skewed to basic and acidic residues; that stretch reads EGSRAEPVKDEL. The short motif at 510–513 is the Prevents secretion from ER element; that stretch reads KDEL.

This sequence belongs to the protein disulfide isomerase family.

Its subcellular location is the endoplasmic reticulum lumen. The catalysed reaction is Catalyzes the rearrangement of -S-S- bonds in proteins.. Its function is as follows. Participates in the folding of proteins containing disulfide bonds, may be involved in glycosylation, prolyl hydroxylation and triglyceride transfer. This Zea mays (Maize) protein is Protein disulfide-isomerase (PDI).